The chain runs to 489 residues: Protein LMBR1L (489 aa).

Topologically, residues 1–21 are extracellular; the sequence is MEAADYEVLSVREQLFHDRVR. Residues 1 to 59 are interaction with LGB; sequence MEAADYEVLSVREQLFHDRVRECIISILLFATLYILCHIFLTRFKKPAEFTTVDDEDAT. The segment at 1-76 is LCN1-binding; it reads MEAADYEVLS…LCTFTLAVAL (76 aa). Residues 22 to 42 traverse the membrane as a helical segment; sequence ECIISILLFATLYILCHIFLT. Residues 43–66 lie on the Cytoplasmic side of the membrane; that stretch reads RFKKPAEFTTVDDEDATVNKIALE. Residues 67–87 traverse the membrane as a helical segment; sequence LCTFTLAVALGAVLLLPFSII. The Extracellular segment spans residues 88-114; the sequence is SNEVLLSLPRNYYIQWLNGSLIHGLWN. A helical transmembrane segment spans residues 115–135; sequence LVFLFSNLSLVFLMPFAYFFT. Residues 136–154 are Cytoplasmic-facing; it reads ESEGFAGSRKGVLGRVYET. A helical membrane pass occupies residues 155–175; that stretch reads VVMLILLTLLVLGMVWVASAI. Residues 176–196 are Extracellular-facing; that stretch reads VDNDKASRESLYDFWEYYLPY. Residues 197–217 traverse the membrane as a helical segment; that stretch reads LYSCISFLGVLLLLVCTPLGL. Residues 218 to 305 are Cytoplasmic-facing; the sequence is ARMFSVTGKL…NLGYPLAMLC (88 aa). The chain crosses the membrane as a helical span at residues 306–326; it reads LLVLTGLSVLIVAVHILELLI. At 327 to 350 the chain is on the extracellular side; sequence DEAAMPRGMQDAALGQASFSKLGS. The chain crosses the membrane as a helical span at residues 351–371; it reads FGAIIQVVLIFYLMVSSVVGF. At 372–388 the chain is on the cytoplasmic side; it reads YSSPLFGSLRPRWHDTS. The helical transmembrane segment at 389–409 threads the bilayer; the sequence is MTQIIGNCVCLLVLSSALPVF. Residues 410 to 431 are Extracellular-facing; sequence SRTLGLTRFDLLGDFGRFNWLG. Residues 432 to 452 traverse the membrane as a helical segment; that stretch reads NFYIVFLYNAAFAGLTTLCLV. Topologically, residues 453 to 489 are cytoplasmic; it reads KTFTAAVRAELIRAFGLDRLPLPVSGFPRASRKKQHQ.

It belongs to the LIMR family. Dimer. Can also form higher oligomers. Interacts with LCN1; this interaction mediates the endocytosis of LCN1. Interacts with UBAC2, FAF2, VCP, AMFR, ZNRF3, CTNNB1, LRP6, GSK3B, FZD6, DVL2 and RNF43. Interacts with GSK3A. Interaction with LGB and SCGB1A1 is controversial. Highly expressed in the bone marrow, thymus, spleen and lymphocytes.

It localises to the cell membrane. The protein resides in the endoplasmic reticulum membrane. Plays an essential role in lymphocyte development by negatively regulating the canonical Wnt signaling pathway. In association with UBAC2 and E3 ubiquitin-protein ligase AMFR, promotes the ubiquitin-mediated degradation of CTNNB1 and Wnt receptors FZD6 and LRP6. LMBR1L stabilizes the beta-catenin destruction complex that is required for regulating CTNNB1 levels. Acts as a LCN1 receptor and can mediate its endocytosis. The sequence is that of Protein LMBR1L (Lmbr1l) from Mus musculus (Mouse).